The following is a 773-amino-acid chain: ATP-dependent zinc metalloprotease YME1L1 (773 aa).

The Mitochondrial matrix portion of the chain corresponds to 1–295 (MFSLSSTVQP…TNDSLRRTRL (295 aa)). A helical membrane pass occupies residues 296–316 (ILFVLLLFGIYGLLKNPFLSV). Topologically, residues 317–773 (RFRTTTGLDS…VLEGKKLEVR (457 aa)) are mitochondrial intermembrane. Positions 341, 383, 384, 385, 386, and 387 each coordinate ATP. Position 599 (histidine 599) interacts with Zn(2+). Residue glutamate 600 is part of the active site. 2 residues coordinate Zn(2+): histidine 603 and aspartate 677.

The protein in the N-terminal section; belongs to the AAA ATPase family. In the C-terminal section; belongs to the peptidase M41 family. As to quaternary structure, homohexamer; may also form heterohexamers. Exists in several complexes of 600-1100 kDa. Interacts with AFG1L. Requires Zn(2+) as cofactor. Post-translationally, proteolytically processed by mitochondrial processing peptidase (MPP) to generate the mature form. Degraded in an OMA1-dependent manner in response to oxidative stress. High expression in cardiac and skeletal muscle mitochondria.

It localises to the mitochondrion inner membrane. The protein resides in the mitochondrion. The catalysed reaction is ATP + H2O = ADP + phosphate + H(+). In terms of biological role, ATP-dependent metalloprotease that catalyzes the degradation of folded and unfolded proteins with a suitable degron sequence in the mitochondrial intermembrane region. Plays an important role in regulating mitochondrial morphology and function by cleaving OPA1 at position S2, giving rise to a form of OPA1 that promotes maintenance of normal mitochondrial structure and mitochondrial protein metabolism. Ensures cell proliferation, maintains normal cristae morphology and complex I respiration activity, promotes antiapoptotic activity and protects mitochondria from the accumulation of oxidatively damaged membrane proteins. Required to control the accumulation of nonassembled respiratory chain subunits (NDUFB6, OX4 and ND1). Involved in the mitochondrial adaptation in response to various signals, such as stress or developmental cues, by mediating degradation of mitochondrial proteins to rewire the mitochondrial proteome. Catalyzes degradation of mitochondrial proteins, such as translocases, lipid transfer proteins and metabolic enzymes in response to nutrient starvation in order to limit mitochondrial biogenesis: mechanistically, YME1L is activated by decreased phosphatidylethanolamine levels caused by LPIN1 activity in response to mTORC1 inhibition. Acts as a regulator of adult neural stem cell self-renewal by promoting mitochondrial proteome rewiring, preserving neural stem and progenitor cells self-renewal. Required for normal, constitutive degradation of PRELID1. Catalyzes the degradation of OMA1 in response to membrane depolarization. Mediates degradation of TIMM17A downstream of the integrated stress response (ISR). Catalyzes degradation of MICU1 when MICU1 is not assembled via an interchain disulfide. The chain is ATP-dependent zinc metalloprotease YME1L1 (YME1L1) from Homo sapiens (Human).